Here is a 394-residue protein sequence, read N- to C-terminus: Elongation factor Tu 1 (394 aa).

Residues 10 to 204 enclose the tr-type G domain; it reads KPHVNVGTIG…HLDTYIPEPE (195 aa). Residues 19-26 are G1; that stretch reads GHVDHGKT. Residue 19–26 participates in GTP binding; that stretch reads GHVDHGKT. Mg(2+) is bound at residue Thr26. The interval 60–64 is G2; it reads GITIN. Residues 81–84 are G3; that stretch reads DCPG. Residues 81–85 and 136–139 contribute to the GTP site; these read DCPGH and NKCD. The G4 stretch occupies residues 136–139; it reads NKCD. Positions 174 to 176 are G5; the sequence is SAL.

The protein belongs to the TRAFAC class translation factor GTPase superfamily. Classic translation factor GTPase family. EF-Tu/EF-1A subfamily. In terms of assembly, monomer.

It is found in the cytoplasm. The catalysed reaction is GTP + H2O = GDP + phosphate + H(+). GTP hydrolase that promotes the GTP-dependent binding of aminoacyl-tRNA to the A-site of ribosomes during protein biosynthesis. The protein is Elongation factor Tu 1 of Haemophilus influenzae (strain 86-028NP).